Consider the following 555-residue polypeptide: Bicyclo-germacrene synthase (555 aa).

Mg(2+) contacts are provided by aspartate 311 and glutamate 315. The DDXXD motif motif lies at aspartate 311–glutamate 315. Homodimerization stretches follow at residues tyrosine 316–leucine 322 and glutamate 392–glycine 429. 2 residues coordinate Mg(2+): aspartate 459 and glutamate 467.

It belongs to the terpene synthase family. Homodimer. Requires Mn(2+) as cofactor. The cofactor is Mg(2+). Expressed in peltate glandular trichomes. Present at low levels in flowers, leaves and stems.

The catalysed reaction is (2E,6E)-farnesyl diphosphate = bicyclogermacrene + diphosphate. It carries out the reaction (2E)-geranyl diphosphate = terpinolene + diphosphate. It catalyses the reaction (2E)-geranyl diphosphate = (4R)-limonene + diphosphate. The enzyme catalyses (2E)-geranyl diphosphate + H2O = (2E)-geraniol + diphosphate. The catalysed reaction is (2E,6E)-farnesyl diphosphate = allo-aromadendrene + diphosphate. The protein operates within secondary metabolite biosynthesis; terpenoid biosynthesis. Its function is as follows. Involved in the biosynthesis of phenolic sesquiterpenes natural products. Sesquiterpene synthase converting (2E,6E)-farnesyl diphosphate (FPP) to alloaromadendrene and bicyclo-germacrene. The product formation is dependent on the metal ions present and in presence of manganese, bicyclo-germacrene is greatly favored while both alloaromadendrene and bicyclo-germacrene are produced in equivalent amounts in the presence of magnesium. Can also convert geranyl diphosphate (GPP) to terpinolene, limonene and geraniol, and this conversion is not affected by the presence of magnesium or manganese. The sequence is that of Bicyclo-germacrene synthase (TPS4) from Origanum vulgare (Wild marjoram).